We begin with the raw amino-acid sequence, 489 residues long: Mitochondrial distribution and morphology protein 12 (489 aa).

An SMP-LTD domain is found at 1-489 (MSIDLNWEAA…VFPSFWTFLV (489 aa)). The segment covering 72 to 82 (ESDSEDEDEGH) has biased composition (acidic residues). Disordered stretches follow at residues 72-97 (ESDS…AAAD), 201-313 (WPDA…MRER), and 394-432 (DINH…QPRR). Over residues 231–249 (LDTGSPSRPSTANTNPTQL) the composition is skewed to polar residues. 2 stretches are compositionally biased toward low complexity: residues 250–265 (SHGQ…NTSN) and 398–424 (QQRQ…NNPE).

This sequence belongs to the MDM12 family. As to quaternary structure, component of the ER-mitochondria encounter structure (ERMES) or MDM complex, composed of MMM1, MDM10, mdm12 and MDM34. An MMM1 homodimer associates with one molecule of mdm12 on each side in a pairwise head-to-tail manner, and the SMP-LTD domains of MMM1 and mdm12 generate a continuous hydrophobic tunnel for phospholipid trafficking.

It localises to the mitochondrion outer membrane. It is found in the endoplasmic reticulum membrane. Functionally, component of the ERMES/MDM complex, which serves as a molecular tether to connect the endoplasmic reticulum (ER) and mitochondria. Components of this complex are involved in the control of mitochondrial shape and protein biogenesis, and function in nonvesicular lipid trafficking between the ER and mitochondria. mdm12 is required for the interaction of the ER-resident membrane protein MMM1 and the outer mitochondrial membrane-resident beta-barrel protein MDM10. The mdm12-MMM1 subcomplex functions in the major beta-barrel assembly pathway that is responsible for biogenesis of all mitochondrial outer membrane beta-barrel proteins, and acts in a late step after the SAM complex. The MDM10-mdm12-MMM1 subcomplex further acts in the TOM40-specific pathway after the action of the mdm12-MMM1 complex. Essential for establishing and maintaining the structure of mitochondria and maintenance of mtDNA nucleoids. The sequence is that of Mitochondrial distribution and morphology protein 12 from Talaromyces marneffei (strain ATCC 18224 / CBS 334.59 / QM 7333) (Penicillium marneffei).